We begin with the raw amino-acid sequence, 767 residues long: V-set and immunoglobulin domain-containing protein 10-like 2 (767 aa).

Residues 1-28 (MVGQRAQHSPVSLLLLIHLCLLHLRASG) form the signal peptide. 3 consecutive Ig-like domains span residues 34–140 (PEAP…SHLT), 150–234 (PQVR…AFLD), and 242–324 (PVIT…TTVQ). Disulfide bonds link C56-C122, C169-C217, and C268-C308. N376 carries an N-linked (GlcNAc...) asparagine glycan. 2 consecutive Ig-like domains span residues 399–499 (PALA…LQLE) and 501–593 (PQLD…VLLE). 2 cysteine pairs are disulfide-bonded: C435–C481 and C522–C577. One can recognise a Fibronectin type-III domain in the interval 599–699 (APPNVTISRL…EVKIPADPPF (101 aa)). Residues N602 and N628 are each glycosylated (N-linked (GlcNAc...) asparagine). Residues 704-724 (AVLGAAGTGMVVATVASLLVF) form a helical membrane-spanning segment. The interval 735–754 (PRLETPTTTPGLDPAQETTD) is disordered. Residues 739–754 (TPTTTPGLDPAQETTD) are compositionally biased toward polar residues.

It is found in the membrane. This is V-set and immunoglobulin domain-containing protein 10-like 2 from Homo sapiens (Human).